Reading from the N-terminus, the 240-residue chain is Bidirectional sugar transporter SWEET5 (240 aa).

Residues 1 to 9 (MTDPHTART) are Extracellular-facing. The chain crosses the membrane as a helical span at residues 10-30 (IVGIVGNVISFGLFCAPIPTM). Residues 10–95 (IVGIVGNVIS…YVTIFFVFAT (86 aa)) form the MtN3/slv 1 domain. The Cytoplasmic portion of the chain corresponds to 31–45 (VKIWKMKSVSEFKPD). The chain crosses the membrane as a helical span at residues 46-66 (PYVATVLNCMMWTFYGLPFVQ). At 67–72 (PDSLLV) the chain is on the extracellular side. Residues 73 to 93 (ITINGTGLFMELVYVTIFFVF) form a helical membrane-spanning segment. Residues 94 to 103 (ATSPVRRKIT) lie on the Cytoplasmic side of the membrane. A helical transmembrane segment spans residues 104–124 (IAMVIEVIFMAVVIFCTMYFL). The Extracellular segment spans residues 125–131 (HTTKQRS). A helical membrane pass occupies residues 132 to 152 (MLIGILCIVFNVIMYAAPLTV). The MtN3/slv 2 domain maps to 133 to 217 (LIGILCIVFN…IIYITYYKTT (85 aa)). At 153–165 (MKLVIKTKSVKYM) the chain is on the cytoplasmic side. Residues 166–186 (PFFLSLANFMNGVVWVIYACL) form a helical membrane-spanning segment. The Extracellular segment spans residues 187–190 (KFDP). Residues 191–211 (YILIPNGLGSLSGIIQLIIYI) form a helical membrane-spanning segment. Topologically, residues 212-240 (TYYKTTNWNDDDEDKEKRYSNAGIELGQA) are cytoplasmic.

Belongs to the SWEET sugar transporter family. As to quaternary structure, forms homooligomers and heterooligomers with SWEET6, SWEET8, SWEET9, SWEET11 and SWEET12.

The protein localises to the cell membrane. Mediates both low-affinity uptake and efflux of sugar across the plasma membrane. May play roles in nurturing the male gametophyte. The polypeptide is Bidirectional sugar transporter SWEET5 (Arabidopsis thaliana (Mouse-ear cress)).